The primary structure comprises 171 residues: uncharacterized protein (171 aa).

2 helical membrane passes run 13-35 (VGAS…IATA) and 50-72 (ATVL…AYVV).

It localises to the cell membrane. This is an uncharacterized protein from Treponema pallidum (strain Nichols).